The chain runs to 159 residues: 2-C-methyl-D-erythritol 2,4-cyclodiphosphate synthase (159 aa).

2 residues coordinate a divalent metal cation: D8 and H10. 4-CDP-2-C-methyl-D-erythritol 2-phosphate is bound by residues 8 to 10 (DVH) and 34 to 35 (HS). H42 contacts a divalent metal cation. Residues 56-58 (DIG), 61-65 (FPDTD), 100-106 (AQEPKMA), 132-135 (TTTE), F139, and R142 each bind 4-CDP-2-C-methyl-D-erythritol 2-phosphate.

It belongs to the IspF family. Homotrimer. A divalent metal cation serves as cofactor.

It carries out the reaction 4-CDP-2-C-methyl-D-erythritol 2-phosphate = 2-C-methyl-D-erythritol 2,4-cyclic diphosphate + CMP. The protein operates within isoprenoid biosynthesis; isopentenyl diphosphate biosynthesis via DXP pathway; isopentenyl diphosphate from 1-deoxy-D-xylulose 5-phosphate: step 4/6. Involved in the biosynthesis of isopentenyl diphosphate (IPP) and dimethylallyl diphosphate (DMAPP), two major building blocks of isoprenoid compounds. Catalyzes the conversion of 4-diphosphocytidyl-2-C-methyl-D-erythritol 2-phosphate (CDP-ME2P) to 2-C-methyl-D-erythritol 2,4-cyclodiphosphate (ME-CPP) with a corresponding release of cytidine 5-monophosphate (CMP). The sequence is that of 2-C-methyl-D-erythritol 2,4-cyclodiphosphate synthase from Alkaliphilus metalliredigens (strain QYMF).